Here is a 407-residue protein sequence, read N- to C-terminus: Arginine deiminase (407 aa).

Residue cysteine 397 is the Amidino-cysteine intermediate of the active site.

Belongs to the arginine deiminase family.

Its subcellular location is the cytoplasm. The catalysed reaction is L-arginine + H2O = L-citrulline + NH4(+). The protein operates within amino-acid degradation; L-arginine degradation via ADI pathway; carbamoyl phosphate from L-arginine: step 1/2. The sequence is that of Arginine deiminase (arcA) from Escherichia coli O6:H1 (strain CFT073 / ATCC 700928 / UPEC).